The following is a 333-amino-acid chain: Phosphoribosylformylglycinamidine cyclo-ligase (333 aa).

The protein belongs to the AIR synthase family.

It is found in the cytoplasm. The enzyme catalyses 2-formamido-N(1)-(5-O-phospho-beta-D-ribosyl)acetamidine + ATP = 5-amino-1-(5-phospho-beta-D-ribosyl)imidazole + ADP + phosphate + H(+). Its pathway is purine metabolism; IMP biosynthesis via de novo pathway; 5-amino-1-(5-phospho-D-ribosyl)imidazole from N(2)-formyl-N(1)-(5-phospho-D-ribosyl)glycinamide: step 2/2. In Methanosarcina acetivorans (strain ATCC 35395 / DSM 2834 / JCM 12185 / C2A), this protein is Phosphoribosylformylglycinamidine cyclo-ligase.